A 443-amino-acid chain; its full sequence is Protoheme IX farnesyltransferase, mitochondrial (443 aa).

Residues 68–113 (LSQRVKPKPEPPASPFLEHTSSGQARADEDELPSFPAPSRPLSRKP) are disordered. The next 7 helical transmembrane spans lie at 174 to 194 (AGFA…TSLG), 230 to 250 (ISPL…VALL), 252 to 272 (WGVN…YTCC), 286 to 306 (VGAV…TGSL), 308 to 328 (AGAL…FNAL), 363 to 383 (LIAL…FPVI), and 410 to 430 (LFFC…TCKQ).

It belongs to the UbiA prenyltransferase family.

The protein localises to the mitochondrion membrane. The catalysed reaction is heme b + (2E,6E)-farnesyl diphosphate + H2O = Fe(II)-heme o + diphosphate. Converts protoheme IX and farnesyl diphosphate to heme O. This is Protoheme IX farnesyltransferase, mitochondrial (Cox10) from Mus musculus (Mouse).